The primary structure comprises 40 residues: Natriuretic peptide PaNP-b (40 aa).

Cys9 and Cys25 are oxidised to a cystine. The propeptide occupies 36–40 (IPGGS).

The protein belongs to the natriuretic peptide family. As to expression, expressed by the venom gland.

The protein localises to the secreted. Snake venom natriuretic peptide that targets both NPR1 and NPR2. Exhibits hypotensive and vasodepressor activities. The polypeptide is Natriuretic peptide PaNP-b (Pseudechis australis (Mulga snake)).